Reading from the N-terminus, the 843-residue chain is uncharacterized protein (843 aa).

The segment at residues cysteine 15–cysteine 42 is a DNA-binding region (zn(2)-C6 fungal-type).

It is found in the nucleus. Required for growth on non-fermentable carbon sources. This is an uncharacterized protein from Saccharomyces cerevisiae (strain ATCC 204508 / S288c) (Baker's yeast).